We begin with the raw amino-acid sequence, 262 residues long: Nitrate transport protein NasD (262 aa).

Positions 5 to 239 (IQVQGVSQRF…RPRNRVQLAD (235 aa)) constitute an ABC transporter domain. 41–48 (GHSGCGKS) is a binding site for ATP.

The protein belongs to the ABC transporter superfamily.

The protein resides in the cell membrane. Probably part of a high-affinity binding-protein-dependent transport system for nitrate. Probably responsible for energy coupling to the transport system. The polypeptide is Nitrate transport protein NasD (nasD) (Klebsiella oxytoca).